Consider the following 337-residue polypeptide: Glyceraldehyde-3-phosphate dehydrogenase (337 aa).

NAD(+)-binding positions include Arg-12–Ile-13, Asp-34, and Arg-79. D-glyceraldehyde 3-phosphate is bound by residues Ser-150–Thr-152, Thr-181, Thr-210–Gly-211, and Arg-233. Cys-151 acts as the Nucleophile in catalysis. Asn-315 is an NAD(+) binding site.

This sequence belongs to the glyceraldehyde-3-phosphate dehydrogenase family. As to quaternary structure, homotetramer.

It is found in the cytoplasm. The enzyme catalyses D-glyceraldehyde 3-phosphate + phosphate + NAD(+) = (2R)-3-phospho-glyceroyl phosphate + NADH + H(+). Its pathway is carbohydrate degradation; glycolysis; pyruvate from D-glyceraldehyde 3-phosphate: step 1/5. The polypeptide is Glyceraldehyde-3-phosphate dehydrogenase (GPD-1) (Claviceps purpurea (strain 20.1) (Ergot fungus)).